Reading from the N-terminus, the 2737-residue chain is Non-reducing polyketide synthase ATEG_07661 (2737 aa).

The N-terminal acylcarrier protein transacylase domain (SAT) stretch occupies residues 75-245 (SRSLAELDSW…VRYDQTRATV (171 aa)). Cys-154 acts as the Nucleophile; for transacylase activity in catalysis. His-276 serves as the catalytic Proton donor/acceptor; for transacylase activity. A Ketosynthase family 3 (KS3) domain is found at 427–854 (NEAIAIVGMS…GSNASMIITE (428 aa)). Residues Cys-603, His-738, and His-777 each act as for beta-ketoacyl synthase activity in the active site. The segment at 969 to 1260 (FGGQVSRFVG…IMASRAIAQS (292 aa)) is malonyl-CoA:ACP transacylase (MAT). Positions 1368–1503 (LQSLWNFVEF…ASVEMRAPTD (136 aa)) are N-terminal hotdog fold. A PKS/mFAS DH domain is found at 1368–1683 (LQSLWNFVEF…YGRVAKASMS (316 aa)). The tract at residues 1399–1681 (FVLSHVIAQT…VQYGRVAKAS (283 aa)) is product template (PT) domain. The Proton acceptor; for dehydratase activity role is filled by His-1403. Residues 1535–1683 (VEVLQGRNVY…YGRVAKASMS (149 aa)) form a C-terminal hotdog fold region. Residue Asp-1592 is the Proton donor; for dehydratase activity of the active site. Positions 1724–1747 (SRTTKKKAKASKSKSSVKKDKAPS) are disordered. Over residues 1725–1739 (RTTKKKAKASKSKSS) the composition is skewed to basic residues. Positions 1750–1824 (RDITDEVRNL…KFVACVSNAL (75 aa)) constitute a Carrier domain. The residue at position 1784 (Ser-1784) is an O-(pantetheine 4'-phosphoryl)serine. The interval 1827–1876 (PNQGQSSIDEDDEDDEHSEDSSNESSSAASDEDASSGLESPDTGILTPED) is disordered. Over residues 1834–1848 (IDEDDEDDEHSEDSS) the composition is skewed to acidic residues. Residues 1849 to 1866 (NESSSAASDEDASSGLES) show a composition bias toward low complexity. Residues 2094-2270 (ADRIQSSSGS…GFGHVDWTDG (177 aa)) are methyltransferase domain. Positions 2362 to 2665 (VVLVTGATGS…IPFKDWISRV (304 aa)) are NADPH-binding domain.

Its pathway is secondary metabolite biosynthesis. Functionally, non-reducing polyketide synthase; part of the cluster B that mediates the biosynthesis of azasperpyranones, members of the azaphilone family that exhibit anti-cancer activities. Azasperpyranones are synthesized by 2 clusters, A and B. Cluster A is responsible for the production of the polyhydric phenol moiety while the azaphilonoid scaffold is produced by the cluster B. The non-reducing polyketide synthase ATEG_03629 produces 5-methyl orsellinic acid, which is then reduced to 5-methyl orsellinic aldehyde by the NRPS-like protein ATEG_03630. 5-methyl orsellinic aldehyde is then first hydroxylated by the FAD-dependent monooxygenase ATEG_03635 and subsequently hydroxylated by the cytochrome P450 monooxygenase ATEG_03631 to produce the unstable polyhydric phenol precursor of azasperpyranones. On the other hand, the polyketide synthase ATEG_07659 is responsible for producing the 3,5-dimethyloctadienone moiety from acetyl-CoA, three malonyl-CoA, and two S-adenosyl methionines (SAM). The 3,5-dimethyloctadienone moiety is then loaded onto the SAT domain of ATEG_07661 and extended with four malonyl-CoA and one SAM, which leads to the formation of 2,4-dihydroxy-6-(5,7-dimethyl-2-oxo-trans-3-trans-5-nonadienyl)-3-methylbenzaldehyde (compound 8) after reductive release and aldol condensation. The FAD-dependent monooxygenase ATEG_07662 is the next enzyme in the biosynthesis sequence and hydroxylates the side chain at the benzylic position of compound 8. In Aspergillus nidulans, afoF, the ortholog of the FAD-dependent oxygenase ATEG_07660, is the key enzyme for the biosynthesis of asperfuranone by catalyzing the hydroxylation at C-8 of to prevent the formation of a six-membered ring hemiacetal intermediate and thus facilitating the formation of a five-membered ring to produce asperfuranone. In Aspergillus terreus, ATEG_07660 is probably not functional, which leads to the formation of the six-membered ring hemiacetal intermediate presperpyranone instead of asperfuranone. Finally, ATEG_03636 is involved in the condensation of the polyhydric phenol moiety produced by cluster A and the perasperpyranone precursor produced by cluster B, to yield azasperpyranone A. Further modifications of azasperpyranone A result in the production of derivatives, including azasperpyranone B to F. This Aspergillus terreus (strain NIH 2624 / FGSC A1156) protein is Non-reducing polyketide synthase ATEG_07661.